A 96-amino-acid chain; its full sequence is uncharacterized protein (96 aa).

The signal sequence occupies residues 1 to 19; the sequence is MKQIIPALITLSFSPMAIA.

This is an uncharacterized protein from Synechocystis sp. (strain ATCC 27184 / PCC 6803 / Kazusa).